The following is a 1024-amino-acid chain: Beta-galactosidase (1024 aa).

Substrate is bound by residues asparagine 103 and aspartate 202. Na(+) is bound at residue aspartate 202. Mg(2+)-binding residues include glutamate 417, histidine 419, and glutamate 462. Residues glutamate 462 and 538-541 (EYAH) contribute to the substrate site. The active-site Proton donor is the glutamate 462. The active-site Nucleophile is the glutamate 538. Asparagine 598 serves as a coordination point for Mg(2+). The Na(+) site is built by phenylalanine 602 and asparagine 605. Residues asparagine 605 and tryptophan 1000 each coordinate substrate.

Belongs to the glycosyl hydrolase 2 family. In terms of assembly, homotetramer. Requires Mg(2+) as cofactor. Na(+) serves as cofactor.

It carries out the reaction Hydrolysis of terminal non-reducing beta-D-galactose residues in beta-D-galactosides.. In Escherichia coli O127:H6 (strain E2348/69 / EPEC), this protein is Beta-galactosidase.